The primary structure comprises 246 residues: Orotidine 5'-phosphate decarboxylase (246 aa).

Substrate-binding positions include D22, K44, 71–80 (DLKYHDIPHT), T130, R191, Q201, G221, and R222. K73 acts as the Proton donor in catalysis.

This sequence belongs to the OMP decarboxylase family. Type 1 subfamily. As to quaternary structure, homodimer.

It carries out the reaction orotidine 5'-phosphate + H(+) = UMP + CO2. Its pathway is pyrimidine metabolism; UMP biosynthesis via de novo pathway; UMP from orotate: step 2/2. In terms of biological role, catalyzes the decarboxylation of orotidine 5'-monophosphate (OMP) to uridine 5'-monophosphate (UMP). The chain is Orotidine 5'-phosphate decarboxylase from Neisseria meningitidis serogroup A / serotype 4A (strain DSM 15465 / Z2491).